The following is a 154-amino-acid chain: Myoglobin (154 aa).

One can recognise a Globin domain in the interval Gly2 to Lys148. Ser4 bears the Phosphoserine mark. His65 contacts nitrite. His65 is a binding site for O2. The residue at position 68 (Thr68) is a Phosphothreonine. His94 serves as a coordination point for heme b.

It belongs to the globin family. As to quaternary structure, monomeric.

It localises to the cytoplasm. The protein localises to the sarcoplasm. The enzyme catalyses Fe(III)-heme b-[protein] + nitric oxide + H2O = Fe(II)-heme b-[protein] + nitrite + 2 H(+). It catalyses the reaction H2O2 + AH2 = A + 2 H2O. Functionally, monomeric heme protein which primary function is to store oxygen and facilitate its diffusion within muscle tissues. Reversibly binds oxygen through a pentacoordinated heme iron and enables its timely and efficient release as needed during periods of heightened demand. Depending on the oxidative conditions of tissues and cells, and in addition to its ability to bind oxygen, it also has a nitrite reductase activity whereby it regulates the production of bioactive nitric oxide. Under stress conditions, like hypoxia and anoxia, it also protects cells against reactive oxygen species thanks to its pseudoperoxidase activity. The protein is Myoglobin (MB) of Delphinus delphis (Short-beaked common dolphin).